The chain runs to 95 residues: Large ribosomal subunit protein uL23 (95 aa).

Belongs to the universal ribosomal protein uL23 family. Part of the 50S ribosomal subunit. Contacts protein L29, and trigger factor when it is bound to the ribosome.

One of the early assembly proteins it binds 23S rRNA. One of the proteins that surrounds the polypeptide exit tunnel on the outside of the ribosome. Forms the main docking site for trigger factor binding to the ribosome. The polypeptide is Large ribosomal subunit protein uL23 (Leuconostoc mesenteroides subsp. mesenteroides (strain ATCC 8293 / DSM 20343 / BCRC 11652 / CCM 1803 / JCM 6124 / NCDO 523 / NBRC 100496 / NCIMB 8023 / NCTC 12954 / NRRL B-1118 / 37Y)).